The chain runs to 392 residues: MTAVEGSSLTALNKGRLFASFDVDAFEVPGGRDEIWRFTPLRRLRGLHDGSAVANGKVHIRVSQQSGVQTEIVGRGDGRLGQGGIPTDRVAAQAFSSFQSATVVTVGRDMQIATPINIAVTGPDKGAVVYGHLQIRVCKFGEAVVVIDHRGSGTYADNVEFIVEAAARLTVVWIADWADDMVHLSAHHALLGKDAVLRHITVTLGGEVVRVSANVRFSGPGGDAELLGLYFADDGQHLESRLLVDHAHPDCKSNVLYKGALQGDPVSSRPDAHTVWVGDVLIHPEATGTDTFEVNRNLVLTNGVRADSVPNLEIETDEIVGAGHASATGRFDDEQLFYLRSRGIGEEQARRLLVRGFFGEIISKIAVPQVRERLIAAIEHELTITESRSTAS.

The protein belongs to the iron-sulfur cluster assembly SufBD family.

The sequence is that of Iron-sulfur cluster assembly SufBD family protein ML0594 from Mycobacterium leprae (strain TN).